The following is a 185-amino-acid chain: GTP cyclohydrolase 1 (185 aa).

Zn(2+)-binding residues include cysteine 75, histidine 78, and cysteine 146.

It belongs to the GTP cyclohydrolase I family. Homomer.

It carries out the reaction GTP + H2O = 7,8-dihydroneopterin 3'-triphosphate + formate + H(+). It functions in the pathway cofactor biosynthesis; 7,8-dihydroneopterin triphosphate biosynthesis; 7,8-dihydroneopterin triphosphate from GTP: step 1/1. This is GTP cyclohydrolase 1 from Clostridium kluyveri (strain NBRC 12016).